The sequence spans 542 residues: DNA-binding protein modulo (542 aa).

Residues 1–166 (MAQKKAVTVK…RGIPKVKVGK (166 aa)) are disordered. Phosphoserine occurs at positions 42 and 44. Residues 59 to 114 (SEEDESDVEEQNDEQPGDDSDFETEEAAGLIDDEAEEDEEYNSDDEEDDDDDELEP) show a composition bias toward acidic residues. A phosphoserine mark is found at serine 120, serine 129, and serine 142. Over residues 123–135 (ADEVDESDDDEEA) the composition is skewed to acidic residues. The span at 136–158 (PVEKPVSKKSEKANSEKSEENRG) shows a compositional bias: basic and acidic residues. RRM domains are found at residues 175 to 251 (QIVF…QPRN), 258 to 331 (RTVV…RISQ), 340 to 429 (LTLV…NLTS), and 420 to 489 (RAIL…PNSL). Residue serine 304 is modified to Phosphoserine. Serine 330 carries the phosphoserine; by PKA modification. Serine 443 carries the post-translational modification Phosphoserine. Positions 505 to 542 (RAPRKFQKDTKPNFGKKPFNKRPAQENGGKSFVKRARF) are disordered.

Post-translationally, the N-terminus is blocked.

The protein localises to the nucleus. Its function is as follows. Its capacity to bind DNA and protein(s), and its differential expression during development suggest a role in the regulation of gene expression during Drosophila development. It could, in interaction with other factors, be required for the translation of instructions provided by pattern forming genes and controls, via chromatin changes, the activity of genes critical for the process of morphogenesis of several embryonic territories. This Drosophila melanogaster (Fruit fly) protein is DNA-binding protein modulo (mod).